The primary structure comprises 231 residues: 7-cyano-7-deazaguanine synthase (231 aa).

8–18 (FSGGQDSTTCL) is a binding site for ATP. Zn(2+)-binding residues include Cys-188, Cys-197, Cys-200, and Cys-203.

It belongs to the QueC family. It depends on Zn(2+) as a cofactor.

It catalyses the reaction 7-carboxy-7-deazaguanine + NH4(+) + ATP = 7-cyano-7-deazaguanine + ADP + phosphate + H2O + H(+). Its pathway is purine metabolism; 7-cyano-7-deazaguanine biosynthesis. Catalyzes the ATP-dependent conversion of 7-carboxy-7-deazaguanine (CDG) to 7-cyano-7-deazaguanine (preQ(0)). The sequence is that of 7-cyano-7-deazaguanine synthase from Enterobacter sp. (strain 638).